Consider the following 348-residue polypeptide: Phenylalanine--tRNA ligase alpha subunit (348 aa).

A Mg(2+)-binding site is contributed by Glu262.

It belongs to the class-II aminoacyl-tRNA synthetase family. Phe-tRNA synthetase alpha subunit type 1 subfamily. In terms of assembly, tetramer of two alpha and two beta subunits. Mg(2+) is required as a cofactor.

It is found in the cytoplasm. The enzyme catalyses tRNA(Phe) + L-phenylalanine + ATP = L-phenylalanyl-tRNA(Phe) + AMP + diphosphate + H(+). This chain is Phenylalanine--tRNA ligase alpha subunit, found in Streptococcus pneumoniae (strain 70585).